We begin with the raw amino-acid sequence, 246 residues long: Peptide methionine sulfoxide reductase (246 aa).

Catalysis depends on C48, which acts as the Cysteine sulfenic acid (-SOH) intermediate. A disulfide bridge links C48 with C246.

Post-translationally, conjugated to URM1, a ubiquitin-like protein.

The catalysed reaction is L-methionyl-[protein] + [thioredoxin]-disulfide + H2O = L-methionyl-(S)-S-oxide-[protein] + [thioredoxin]-dithiol. It catalyses the reaction [thioredoxin]-disulfide + L-methionine + H2O = L-methionine (S)-S-oxide + [thioredoxin]-dithiol. Its function is as follows. Has an important function as a repair enzyme for proteins that have been inactivated by oxidation. Catalyzes the reduction of methionine sulfoxide in proteins to methionine. Does not catalyze the reverse reaction involving the oxidation of methionine residues. The protein is Peptide methionine sulfoxide reductase of Drosophila melanogaster (Fruit fly).